We begin with the raw amino-acid sequence, 528 residues long: MGDAPSPEEKLHLITRNLQEVLGEEKLKEILKERELKVYWGTATTGKPHVAYFVPMSKIADFLKAGCEVTILFADLHAYLDNMKAPWELLELRTSYYENVIKAMLESIGVPLEKLKFTKGTDYQLSKEYTLDVYRLSSLVTQHDAKKAGAEVVKQVEHPLLSGLLYPGLQALDEEYLKVDAQFGGIDQRKIFTFAEKYLPTLGYSKRVHLMNPMVPGLTGSKMSSSEEESKIDLLDRKEDVKKKLKKAFCEPGNVENNGVLSFVKHVLFPLKSEFVILRDEKWGGNKTYTIYQELEKDFAAEVVHPGDLKNSVEVALNKLLDPIREKFNTPALKKLASAAYPDPSKQKPTAKGPAKSSEPEEIIPSRLDIRVGKILSVEKHPDADSLYVEKIDVGEAEPRTVVSGLVQFVPKEELQDRLVVVLCNLKPQKMRGVDSQGMLLCASVEGVSRQVEPLDPPAGSAPGERVFVQGYEKGQPDEELKPKKKVFEKLQADFKISDDCVAQWKQTNFMTKLGFVSCKSLKGGNIS.

Met-1 carries the post-translational modification N-acetylmethionine. Gly-2 is subject to N-acetylglycine; in Tyrosine--tRNA ligase, cytoplasmic, N-terminally processed. Residue Tyr-39 participates in L-tyrosine binding. Tyr-39 serves as a coordination point for trans-resveratrol. The 'HIGH' region signature appears at Thr-44–Tyr-52. Tyr-166, Gln-170, Asp-173, and Gln-188 together coordinate L-tyrosine. Gln-170 and Asp-173 together coordinate trans-resveratrol. An N6-acetyllysine modification is found at Lys-197. The residue at position 205 (Ser-205) is a Phosphoserine. Lys-206 carries the post-translational modification N6-acetyllysine. Residues Lys-222 to Ser-226 carry the 'KMSKS' region motif. Positions Lys-242–Lys-247 match the Nuclear localization signal motif. The disordered stretch occupies residues Ala-339–Ile-363. A tRNA-binding domain is found at Ile-364–Phe-468. Ser-386 is modified (phosphoserine). Lys-474, Lys-482, and Lys-490 each carry N6-acetyllysine.

Belongs to the class-I aminoacyl-tRNA synthetase family. In terms of assembly, homodimer. Interacts (when binding to resveratrol) with PARP1; interaction stimulates the poly-ADP-ribosyltransferase activity of PARP1.

Its subcellular location is the cytoplasm. The protein resides in the nucleus. The catalysed reaction is tRNA(Tyr) + L-tyrosine + ATP = L-tyrosyl-tRNA(Tyr) + AMP + diphosphate + H(+). With respect to regulation, resveratrol strongly inhibits the tyrosine--tRNA ligase activity. Tyrosine--tRNA ligase that catalyzes the attachment of tyrosine to tRNA(Tyr) in a two-step reaction: tyrosine is first activated by ATP to form Tyr-AMP and then transferred to the acceptor end of tRNA(Tyr). Also acts as a positive regulator of poly-ADP-ribosylation in the nucleus, independently of its tyrosine--tRNA ligase activity. Activity is switched upon resveratrol-binding: resveratrol strongly inhibits the tyrosine--tRNA ligase activity and promotes relocalization to the nucleus, where YARS1 specifically stimulates the poly-ADP-ribosyltransferase activity of PARP1. This chain is Tyrosine--tRNA ligase, cytoplasmic (Yars1), found in Rattus norvegicus (Rat).